The chain runs to 266 residues: Hydroxyacylglutathione hydrolase (266 aa).

7 residues coordinate Zn(2+): His53, His55, Asp57, His58, His118, Asp140, and His178.

It belongs to the metallo-beta-lactamase superfamily. Glyoxalase II family. Monomer. Requires Zn(2+) as cofactor.

It catalyses the reaction an S-(2-hydroxyacyl)glutathione + H2O = a 2-hydroxy carboxylate + glutathione + H(+). It functions in the pathway secondary metabolite metabolism; methylglyoxal degradation; (R)-lactate from methylglyoxal: step 2/2. Thiolesterase that catalyzes the hydrolysis of S-D-lactoyl-glutathione to form glutathione and D-lactic acid. The polypeptide is Hydroxyacylglutathione hydrolase (Cupriavidus taiwanensis (strain DSM 17343 / BCRC 17206 / CCUG 44338 / CIP 107171 / LMG 19424 / R1) (Ralstonia taiwanensis (strain LMG 19424))).